A 959-amino-acid chain; its full sequence is AP2-associated protein kinase 1 (959 aa).

Residue methionine 1 is modified to N-acetylmethionine. Basic and acidic residues predominate over residues 1 to 11 (MKKFFDSRREQ). The interval 1–27 (MKKFFDSRREQGSSGLGSGSSGGGGSS) is disordered. Phosphoserine is present on serine 14. Positions 14–27 (SGLGSGSSGGGGSS) are enriched in gly residues. A Protein kinase domain is found at 46–315 (VTVDEVLAEG…QVSYFSFKLL (270 aa)). Residues 52–60 (LAEGGFALV) and lysine 74 contribute to the ATP site. The active-site Proton acceptor is aspartate 176. Position 234 is a phosphotyrosine (tyrosine 234). Serine 235 carries the phosphoserine modification. Residues 340–385 (SEAAVKKTQPKARLTDPIPTTETSIAPRQRPKAGQTQPNPGILPIQ) are disordered. Residues threonine 354 and threonine 389 each carry the phosphothreonine modification. Arginine 391 is subject to Omega-N-methylarginine. 2 disordered regions span residues 398–514 (PLPQ…AVHP) and 578–630 (TAPQ…RAGH). Positions 404–419 (GPSNQPGLLPSVSQPK) are enriched in polar residues. Low complexity predominate over residues 420-435 (AQATPSQPLQSSQPKQ). Threonine 441 is modified (phosphothreonine). Composition is skewed to low complexity over residues 444-481 (QTPA…QPQQ), 494-510 (QQQQ…QQFQ), and 578-603 (TAPQ…KVQT). Threonine 604 is modified (phosphothreonine). Residues 609-625 (IQGQKVGSLTPPSSPKT) are compositionally biased toward polar residues. Serine 616 is modified (phosphoserine). Threonine 618 carries the phosphothreonine modification. Residues serine 621, serine 622, serine 635, and serine 648 each carry the phosphoserine modification. Threonine 651 carries the post-translational modification Phosphothreonine. Disordered regions lie at residues 662-699 (SLNK…FDDD), 727-763 (GGSA…GGQA), 837-857 (PVAQ…TDSL), and 923-943 (ITKN…ESSL). Over residues 670 to 694 (TTTPSGSPRTSQQNVSNASEGSTWN) the composition is skewed to polar residues. Serine 729 is subject to Phosphoserine. Composition is skewed to polar residues over residues 738–752 (QPTQ…SFSA) and 842–857 (LPSQ…TDSL). The clathrin-binding domain (CBD) stretch occupies residues 821–958 (DKADVAVESL…SLLLVDQLID (138 aa)). Serine 844, serine 935, and serine 936 each carry phosphoserine. The span at 929–942 (GGHSRNSSGSSESS) shows a compositional bias: low complexity.

It belongs to the protein kinase superfamily. Ser/Thr protein kinase family. As to quaternary structure, interacts (via CBD domain) with clathrin. Interacts with AP-2 complex. Interacts with NUMB. Interacts with alpha-adaptin. Interacts with EPS15 isoform 2. Interacts with membrane-bound activated NOTCH1 but not with the inactive full-length form of NOTCH1. Preferentially interacts with monoubiquitinated activated NOTCH1 compared to the non-ubiquitinated form. Post-translationally, autophosphorylated.

It is found in the cell membrane. The protein localises to the membrane. It localises to the clathrin-coated pit. Its subcellular location is the presynapse. It catalyses the reaction L-seryl-[protein] + ATP = O-phospho-L-seryl-[protein] + ADP + H(+). The catalysed reaction is L-threonyl-[protein] + ATP = O-phospho-L-threonyl-[protein] + ADP + H(+). Stimulated by clathrin. Its function is as follows. Regulates clathrin-mediated endocytosis by phosphorylating the AP2M1/mu2 subunit of the adaptor protein complex 2 (AP-2) which ensures high affinity binding of AP-2 to cargo membrane proteins during the initial stages of endocytosis. Preferentially, may phosphorylate substrates on threonine residues. Regulates phosphorylation of other AP-2 subunits as well as AP-2 localization and AP-2-mediated internalization of ligand complexes. Phosphorylates NUMB and regulates its cellular localization, promoting NUMB localization to endosomes. Binds to and stabilizes the activated form of NOTCH1, increases its localization in endosomes and regulates its transcriptional activity. This chain is AP2-associated protein kinase 1 (Aak1), found in Mus musculus (Mouse).